The primary structure comprises 39 residues: MKVLDDWFSRKFSKAVHGNNHGTISLSTLSYIRVHKLVK.

This is an uncharacterized protein from Saccharomyces cerevisiae (strain ATCC 204508 / S288c) (Baker's yeast).